A 739-amino-acid polypeptide reads, in one-letter code: MAPSFDTLSEQDLHEEEVEIDFSDLKAQYEVRLEEGLDAFVVIDGLPVVPEESKPKLIKFLLKKLNTVGRTREDAIFMPLNEKGMSEGFAFVEYDTPEQAIAATKHLHGTPLDKKHTLAVNKLTDIDRYGREGRVDEEYTPPKIEPFQEKEHLRSWLGDPNARDQFAMYRGDKVGVFWNMKNNPPENVVDRDHWTQLFVQWSPLGTYLASVHPQGVQLWGGPQFGKQKQFPHPFVSLMEFSPGEKYLTTWSSRPIQLDGPPGALSYEEEGKNIIIWDITTGKPLRSFVSHELAAPAGPDGDAAQAKKKVQWPAFKWSADEKFVARMLPGQSISIYELPRMNLLDRTSVKIEGVMDFEWSPATVQREGVKQSEQLLSFWTPEIGSNPAKVGLMSIPSKEVVRTRNLFNVSDVKLHWQSQGAYVCVKVDRHSKSKKSLATNLEIFRVREKGVPVEVVDSLKDTVINFAWEPKGNRFVLITTGEVPTGTAVPPKTAVSFFAPEKTKSGAAGNFKLVRTIEKKTSNGIYWSPKGRFVVVATVHSQQHFDIDFWDLDFEGEKPENEKDLSANLQLMKTNEHFGVTDIDWDPTGRYVVSSASAWTHSLENGYHIHTFSGTTLTEHAVEKFKQLVWRPRPPTLLSKEEQKKVRRNLREYSREFDEEDKYAVDIANTAIVEMRKRLLNEWTAWLKKEKEMVEEEREVLGLPKYEEEPAAKPTPGAEDDTIVEEIVEEIIEESEEIVA.

The RRM domain maps to 39 to 125; sequence AFVVIDGLPV…HTLAVNKLTD (87 aa). 5 WD repeats span residues 191–229, 231–288, 457–498, 516–559, and 574–612; these read RDHW…KQKQ, PHPF…RSFV, SLKD…SFFA, IEKK…EKPE, and NEHF…HTFS.

This sequence belongs to the eIF-3 subunit B family. Component of the eukaryotic translation initiation factor 3 (eIF-3) complex.

The protein localises to the cytoplasm. Its function is as follows. RNA-binding component of the eukaryotic translation initiation factor 3 (eIF-3) complex, which is involved in protein synthesis of a specialized repertoire of mRNAs and, together with other initiation factors, stimulates binding of mRNA and methionyl-tRNAi to the 40S ribosome. The eIF-3 complex specifically targets and initiates translation of a subset of mRNAs involved in cell proliferation. This Coccidioides immitis (strain RS) (Valley fever fungus) protein is Eukaryotic translation initiation factor 3 subunit B.